The chain runs to 173 residues: dCTP deaminase, dUMP-forming (173 aa).

DCTP is bound by residues 93–98, aspartate 111, 119–121, and glutamine 138; these read RSSIGR and TLE. Glutamate 121 serves as the catalytic Proton donor/acceptor.

The protein belongs to the dCTP deaminase family. In terms of assembly, homotrimer.

The catalysed reaction is dCTP + 2 H2O = dUMP + NH4(+) + diphosphate. The protein operates within pyrimidine metabolism; dUMP biosynthesis; dUMP from dCTP: step 1/1. Its function is as follows. Bifunctional enzyme that catalyzes both the deamination of dCTP to dUTP and the hydrolysis of dUTP to dUMP without releasing the toxic dUTP intermediate. This chain is dCTP deaminase, dUMP-forming, found in Leptospira interrogans serogroup Icterohaemorrhagiae serovar copenhageni (strain Fiocruz L1-130).